A 146-amino-acid polypeptide reads, in one-letter code: Heat-stable 19 kDa antigen (146 aa).

The N-terminal stretch at 1 to 20 is a signal peptide; that stretch reads MKFSLLSAIAAAVFVPFTSA.

Belongs to the cerato-platanin family. Glycosylated.

It is found in the secreted. The chain is Heat-stable 19 kDa antigen (CSA) from Coccidioides immitis (strain RS) (Valley fever fungus).